A 376-amino-acid polypeptide reads, in one-letter code: Protein-glutamate methylesterase/protein-glutamine glutaminase 1 (376 aa).

The Response regulatory domain maps to 4 to 121 (KVLVVDDSSF…ARNRDEAVSL (118 aa)). 4-aspartylphosphate is present on Asp-55. Residues 138–174 (RPVASSTPVQERPQSTLNRPTTGLRREAPAQAPVSRA) form a disordered region. Residues 141 to 158 (ASSTPVQERPQSTLNRPT) show a composition bias toward polar residues. Positions 183 to 376 (SGKKYQLTAI…ERMLVEVGLA (194 aa)) constitute a CheB-type methylesterase domain. Residues Ser-195, His-222, and Asp-318 contribute to the active site.

Belongs to the CheB family. Phosphorylated by CheA. Phosphorylation of the N-terminal regulatory domain activates the methylesterase activity.

Its subcellular location is the cytoplasm. It carries out the reaction [protein]-L-glutamate 5-O-methyl ester + H2O = L-glutamyl-[protein] + methanol + H(+). The enzyme catalyses L-glutaminyl-[protein] + H2O = L-glutamyl-[protein] + NH4(+). Functionally, involved in chemotaxis. Part of a chemotaxis signal transduction system that modulates chemotaxis in response to various stimuli. Catalyzes the demethylation of specific methylglutamate residues introduced into the chemoreceptors (methyl-accepting chemotaxis proteins or MCP) by CheR. Also mediates the irreversible deamidation of specific glutamine residues to glutamic acid. This chain is Protein-glutamate methylesterase/protein-glutamine glutaminase 1, found in Vibrio vulnificus (strain CMCP6).